We begin with the raw amino-acid sequence, 100 residues long: uncharacterized protein (100 aa).

Residues 1-18 (MWGFLVLKARWLVTPVRT) form the signal peptide. Residues 48–86 (LTRGVIRVSPQERSQQNQSAPKGPTPSTRPKPRTLGPQA) are disordered. A compositionally biased stretch (polar residues) spans 58–69 (QERSQQNQSAPK). An N-linked (GlcNAc...) asparagine glycan is attached at Asn64.

The protein localises to the secreted. This is an uncharacterized protein from Homo sapiens (Human).